A 452-amino-acid chain; its full sequence is Pentatricopeptide repeat-containing protein At2g30780 (452 aa).

7 PPR repeats span residues 137-171 (TASVYNSLMSVYMWNGLAEECQSLFKDFRRQTHCA), 173-207 (TVVTYNILVSVYGRLLMVKNMEAAFEELQKVKLPP), 208-242 (NSVTYNFLIAGYMTAWNWDKMEATFQEMKRGPVEP), 243-273 (DTDTYQLMLRGYANSGNLNRMEEMYEVIKDQ), 350-384 (KSSIMRAIIAAYFRCNEVDNLANFVKRAESAGWKL), 385-419 (CRSLYHCKIMMYGSQKRFEEMEGVVNEMAETNYGL), and 420-452 (VTKTFAIMIKAYKNHGMESDAEKVKGKMLKRGL).

Belongs to the PPR family. P subfamily.

In Arabidopsis thaliana (Mouse-ear cress), this protein is Pentatricopeptide repeat-containing protein At2g30780.